The sequence spans 294 residues: Putative HTH-type transcriptional regulatory protein STK_12680 (294 aa).

One can recognise an HTH cro/C1-type domain in the interval 123–175; it reads LKKKREEMGLSLGEVAQALGVSRISIYDYEREDSYVSIDIAEKLVELFGDDIL. The H-T-H motif DNA-binding region spans 134 to 153; it reads LGEVAQALGVSRISIYDYER.

The protein is Putative HTH-type transcriptional regulatory protein STK_12680 of Sulfurisphaera tokodaii (strain DSM 16993 / JCM 10545 / NBRC 100140 / 7) (Sulfolobus tokodaii).